We begin with the raw amino-acid sequence, 426 residues long: Serine--tRNA ligase (426 aa).

A disordered region spans residues threonine 44–glycine 67. Positions glutamine 47–glutamine 59 are enriched in polar residues. Threonine 231–glutamate 233 contacts L-serine. ATP is bound by residues arginine 262–glutamate 264 and valine 278. An L-serine-binding site is contributed by glutamate 285. Glutamate 349–serine 352 contacts ATP. Serine 384 is a binding site for L-serine.

It belongs to the class-II aminoacyl-tRNA synthetase family. Type-1 seryl-tRNA synthetase subfamily. Homodimer. The tRNA molecule binds across the dimer.

The protein localises to the cytoplasm. The enzyme catalyses tRNA(Ser) + L-serine + ATP = L-seryl-tRNA(Ser) + AMP + diphosphate + H(+). The catalysed reaction is tRNA(Sec) + L-serine + ATP = L-seryl-tRNA(Sec) + AMP + diphosphate + H(+). It functions in the pathway aminoacyl-tRNA biosynthesis; selenocysteinyl-tRNA(Sec) biosynthesis; L-seryl-tRNA(Sec) from L-serine and tRNA(Sec): step 1/1. Functionally, catalyzes the attachment of serine to tRNA(Ser). Is also able to aminoacylate tRNA(Sec) with serine, to form the misacylated tRNA L-seryl-tRNA(Sec), which will be further converted into selenocysteinyl-tRNA(Sec). The polypeptide is Serine--tRNA ligase (Akkermansia muciniphila (strain ATCC BAA-835 / DSM 22959 / JCM 33894 / BCRC 81048 / CCUG 64013 / CIP 107961 / Muc)).